Consider the following 972-residue polypeptide: Aminopeptidase N (972 aa).

The Cytoplasmic segment spans residues 2–17 (TSQGRTRTLLNLTPIR). The helical; Signal-anchor for type II membrane protein transmembrane segment at 18 to 39 (LIVALFLVAAAVGLSIGLTYYF) threads the bilayer. The Extracellular portion of the chain corresponds to 40 to 972 (TRKAFDTSEK…LAAFFKKATL (933 aa)). The segment covering 47 to 62 (SEKPGKDDTGGKDKDN) has biased composition (basic and acidic residues). Positions 47–66 (SEKPGKDDTGGKDKDNSPSA) are disordered. Asparagine 99 carries N-linked (GlcNAc...) asparagine glycosylation. Glutamate 208 contributes to the substrate binding site. Asparagine 227 carries N-linked (GlcNAc...) asparagine glycosylation. 343-347 (GAMEN) is a substrate binding site. Histidine 379 contributes to the Zn(2+) binding site. Glutamate 380 functions as the Proton acceptor in the catalytic mechanism. Zn(2+)-binding residues include histidine 383 and glutamate 402. Residue asparagine 549 is glycosylated (N-linked (GlcNAc...) asparagine). 2 disulfide bridges follow: cysteine 759/cysteine 766 and cysteine 804/cysteine 840. Asparagine 858 is a glycosylation site (N-linked (GlcNAc...) asparagine).

Belongs to the peptidase M1 family. It depends on Zn(2+) as a cofactor.

The protein resides in the membrane. It catalyses the reaction Release of an N-terminal amino acid, Xaa-|-Yaa- from a peptide, amide or arylamide. Xaa is preferably Ala, but may be most amino acids including Pro (slow action). When a terminal hydrophobic residue is followed by a prolyl residue, the two may be released as an intact Xaa-Pro dipeptide.. The polypeptide is Aminopeptidase N (Haemonchus contortus (Barber pole worm)).